The primary structure comprises 497 residues: Cobyrinate a,c-diamide synthase (497 aa).

Residues 273–478 (RIGIALDEAF…AHLHGVAYRE (206 aa)) enclose the GATase cobBQ-type domain. C355 serves as the catalytic Nucleophile.

It belongs to the CobB/CbiA family. Mg(2+) is required as a cofactor.

The catalysed reaction is cob(II)yrinate + 2 L-glutamine + 2 ATP + 2 H2O = cob(II)yrinate a,c diamide + 2 L-glutamate + 2 ADP + 2 phosphate + 2 H(+). It carries out the reaction Ni-sirohydrochlorin + 2 L-glutamine + 2 ATP + 2 H2O = Ni-sirohydrochlorin a,c-diamide + 2 L-glutamate + 2 ADP + 2 phosphate + 2 H(+). It functions in the pathway cofactor biosynthesis; adenosylcobalamin biosynthesis; cob(II)yrinate a,c-diamide from sirohydrochlorin (anaerobic route): step 10/10. Functionally, catalyzes the ATP-dependent amidation of the two carboxylate groups at positions a and c of cobyrinate, using either L-glutamine or ammonia as the nitrogen source (Potential). Involved in the biosynthesis of the unique nickel-containing tetrapyrrole coenzyme F430, the prosthetic group of methyl-coenzyme M reductase (MCR), which plays a key role in methanogenesis and anaerobic methane oxidation. Catalyzes the ATP-dependent amidation of the two carboxylate groups at positions a and c of Ni-sirohydrochlorin, using L-glutamine or ammonia as the nitrogen source. In Methanosarcina acetivorans (strain ATCC 35395 / DSM 2834 / JCM 12185 / C2A), this protein is Cobyrinate a,c-diamide synthase.